The following is a 212-amino-acid chain: phospholipase A2 inhibitor and Ly6/PLAUR domain-containing protein (212 aa).

The first 24 residues, 1-24 (MILFRRHRTFLLAFTLLCTLLGLG), serve as a signal peptide directing secretion. Residues 27–117 (LTCEVCKGSG…NSGSVPPPLN (91 aa)) form the UPAR/Ly6 domain. Disulfide bonds link C29-C53, C32-C39, C46-C74, C80-C101, C102-C107, C126-C152, and C145-C173.

Belongs to the CNF-like-inhibitor family.

It is found in the secreted. The chain is phospholipase A2 inhibitor and Ly6/PLAUR domain-containing protein (Pinlyp) from Mus musculus (Mouse).